Here is a 445-residue protein sequence, read N- to C-terminus: Tubulin beta chain (445 aa).

8 residues coordinate GTP: glutamine 11, glutamate 69, serine 138, glycine 142, threonine 143, glycine 144, asparagine 204, and asparagine 226. Residue glutamate 69 participates in Mg(2+) binding.

It belongs to the tubulin family. Dimer of alpha and beta chains. A typical microtubule is a hollow water-filled tube with an outer diameter of 25 nm and an inner diameter of 15 nM. Alpha-beta heterodimers associate head-to-tail to form protofilaments running lengthwise along the microtubule wall with the beta-tubulin subunit facing the microtubule plus end conferring a structural polarity. Microtubules usually have 13 protofilaments but different protofilament numbers can be found in some organisms and specialized cells. Mg(2+) is required as a cofactor.

It is found in the cytoplasm. The protein localises to the cytoskeleton. Tubulin is the major constituent of microtubules, a cylinder consisting of laterally associated linear protofilaments composed of alpha- and beta-tubulin heterodimers. Microtubules grow by the addition of GTP-tubulin dimers to the microtubule end, where a stabilizing cap forms. Below the cap, tubulin dimers are in GDP-bound state, owing to GTPase activity of alpha-tubulin. This Schizophyllum commune (Split gill fungus) protein is Tubulin beta chain (TUB-2).